A 336-amino-acid chain; its full sequence is Ketol-acid reductoisomerase (NADP(+)) 1 (336 aa).

One can recognise a KARI N-terminal Rossmann domain in the interval A2–T181. NADP(+) is bound by residues Y25 to Q28, R48, S52, and D82 to Q85. Residue H107 is part of the active site. G133 contributes to the NADP(+) binding site. The 146-residue stretch at T182–V327 folds into the KARI C-terminal knotted domain. 4 residues coordinate Mg(2+): D190, E194, E226, and E230. S251 is a substrate binding site.

Belongs to the ketol-acid reductoisomerase family. The cofactor is Mg(2+).

It catalyses the reaction (2R)-2,3-dihydroxy-3-methylbutanoate + NADP(+) = (2S)-2-acetolactate + NADPH + H(+). The enzyme catalyses (2R,3R)-2,3-dihydroxy-3-methylpentanoate + NADP(+) = (S)-2-ethyl-2-hydroxy-3-oxobutanoate + NADPH + H(+). It functions in the pathway amino-acid biosynthesis; L-isoleucine biosynthesis; L-isoleucine from 2-oxobutanoate: step 2/4. It participates in amino-acid biosynthesis; L-valine biosynthesis; L-valine from pyruvate: step 2/4. Functionally, involved in the biosynthesis of branched-chain amino acids (BCAA). Catalyzes an alkyl-migration followed by a ketol-acid reduction of (S)-2-acetolactate (S2AL) to yield (R)-2,3-dihydroxy-isovalerate. In the isomerase reaction, S2AL is rearranged via a Mg-dependent methyl migration to produce 3-hydroxy-3-methyl-2-ketobutyrate (HMKB). In the reductase reaction, this 2-ketoacid undergoes a metal-dependent reduction by NADPH to yield (R)-2,3-dihydroxy-isovalerate. The protein is Ketol-acid reductoisomerase (NADP(+)) 1 of Bacillus cereus (strain ATCC 10987 / NRS 248).